The following is a 321-amino-acid chain: Biotin synthase (321 aa).

Residues 45 to 274 form the Radical SAM core domain; that stretch reads FHGNRVDLCS…GALIRLCGGR (230 aa). [4Fe-4S] cluster-binding residues include cysteine 63, cysteine 67, and cysteine 70. 3 residues coordinate [2Fe-2S] cluster: cysteine 139, cysteine 199, and arginine 269.

Belongs to the radical SAM superfamily. Biotin synthase family. In terms of assembly, homodimer. [4Fe-4S] cluster serves as cofactor. [2Fe-2S] cluster is required as a cofactor.

The enzyme catalyses (4R,5S)-dethiobiotin + (sulfur carrier)-SH + 2 reduced [2Fe-2S]-[ferredoxin] + 2 S-adenosyl-L-methionine = (sulfur carrier)-H + biotin + 2 5'-deoxyadenosine + 2 L-methionine + 2 oxidized [2Fe-2S]-[ferredoxin]. It functions in the pathway cofactor biosynthesis; biotin biosynthesis; biotin from 7,8-diaminononanoate: step 2/2. Catalyzes the conversion of dethiobiotin (DTB) to biotin by the insertion of a sulfur atom into dethiobiotin via a radical-based mechanism. The chain is Biotin synthase from Pelotomaculum thermopropionicum (strain DSM 13744 / JCM 10971 / SI).